The chain runs to 229 residues: Peroxiredoxin-like 2A (229 aa).

Positions 14–112 are thioredoxin fold; that stretch reads MWSIGVGAFG…DELGVPLYAV (99 aa). Catalysis depends on redox-active residues Cys85 and Cys88.

The protein belongs to the peroxiredoxin-like PRXL2 family. PRXL2A subfamily. As to expression, expressed by the principal cells of the epididymis. Detected in the head region of epididymal sperm (at protein level). Expressed in bone marrow.

It is found in the cytoplasm. It localises to the secreted. Involved in redox regulation of the cell. Acts as an antioxidant. Inhibits TNFSF11-induced NFKB1 and JUN activation and osteoclast differentiation. May affect bone resorption and help to maintain bone mass. Acts as a negative regulator of macrophage-mediated inflammation by inhibiting macrophage production of inflammatory cytokines, probably through suppression of the MAPK signaling pathway. This is Peroxiredoxin-like 2A from Rattus norvegicus (Rat).